Here is a 344-residue protein sequence, read N- to C-terminus: MIMLIDFDYFFAQVEEINDPSLKGKPVVVSVYSGRNERSGAVATSNYEARALGIKSGMPLYRALEIGKNRAVFLPIRKDFYQKYSDKIMDIISEYSEKMEIASIDEAYIDIDGNDCKIGIANEIKNRILNETGIKVSIGIGINKVIAKMAAEMAKPNGIKCISADETGEFLNNIKINDIPGIGKVLSKNLNEIGIEYLRDIKNFDVNKIKSILGESKTNYLYELYENKYFSPVEPRVKKNFGRYLTLPENTRDIDKIVPYLKKSIDAAYEKAPGIPQEISVVAIMEDLDIVSRSYTGNAIKRDDSINIALNLLNKIISEDNRNIRRIGVRLSKISKNNTLDDFF.

In terms of domain architecture, UmuC spans 2–183; sequence IMLIDFDYFF…IKINDIPGIG (182 aa). Mg(2+)-binding residues include aspartate 6 and aspartate 105. Residue glutamate 106 is part of the active site.

It belongs to the DNA polymerase type-Y family. In terms of assembly, monomer. Mg(2+) is required as a cofactor.

The protein localises to the cytoplasm. It catalyses the reaction DNA(n) + a 2'-deoxyribonucleoside 5'-triphosphate = DNA(n+1) + diphosphate. Poorly processive, error-prone DNA polymerase involved in untargeted mutagenesis. Copies undamaged DNA at stalled replication forks, which arise in vivo from mismatched or misaligned primer ends. These misaligned primers can be extended by PolIV. Exhibits no 3'-5' exonuclease (proofreading) activity. May be involved in translesional synthesis. This chain is DNA polymerase IV, found in Picrophilus torridus (strain ATCC 700027 / DSM 9790 / JCM 10055 / NBRC 100828 / KAW 2/3).